Consider the following 173-residue polypeptide: Ribosome maturation factor RimM (173 aa).

The region spanning 92-165 (EGEFYHADLI…RVVIEMPGEI (74 aa)) is the PRC barrel domain.

This sequence belongs to the RimM family. As to quaternary structure, binds ribosomal protein uS19.

The protein localises to the cytoplasm. Its function is as follows. An accessory protein needed during the final step in the assembly of 30S ribosomal subunit, possibly for assembly of the head region. Essential for efficient processing of 16S rRNA. May be needed both before and after RbfA during the maturation of 16S rRNA. It has affinity for free ribosomal 30S subunits but not for 70S ribosomes. In Nitrobacter hamburgensis (strain DSM 10229 / NCIMB 13809 / X14), this protein is Ribosome maturation factor RimM.